The following is a 218-amino-acid chain: Small ribosomal subunit protein uS3 (218 aa).

A KH type-2 domain is found at 38-106; sequence IREYINKRLQ…RVHINIVEIK (69 aa).

It belongs to the universal ribosomal protein uS3 family. In terms of assembly, part of the 30S ribosomal subunit. Forms a tight complex with proteins S10 and S14.

Binds the lower part of the 30S subunit head. Binds mRNA in the 70S ribosome, positioning it for translation. The sequence is that of Small ribosomal subunit protein uS3 from Geobacillus sp. (strain WCH70).